We begin with the raw amino-acid sequence, 86 residues long: Large ribosomal subunit protein bL31B (86 aa).

It belongs to the bacterial ribosomal protein bL31 family. Type B subfamily. Part of the 50S ribosomal subunit.

This chain is Large ribosomal subunit protein bL31B, found in Citrobacter koseri (strain ATCC BAA-895 / CDC 4225-83 / SGSC4696).